The primary structure comprises 363 residues: Aminomethyltransferase (363 aa).

It belongs to the GcvT family. As to quaternary structure, the glycine cleavage system is composed of four proteins: P, T, L and H.

The enzyme catalyses N(6)-[(R)-S(8)-aminomethyldihydrolipoyl]-L-lysyl-[protein] + (6S)-5,6,7,8-tetrahydrofolate = N(6)-[(R)-dihydrolipoyl]-L-lysyl-[protein] + (6R)-5,10-methylene-5,6,7,8-tetrahydrofolate + NH4(+). Functionally, the glycine cleavage system catalyzes the degradation of glycine. This is Aminomethyltransferase from Prosthecochloris aestuarii (strain DSM 271 / SK 413).